We begin with the raw amino-acid sequence, 620 residues long: Cryptochrome-1 (620 aa).

The Photolyase/cryptochrome alpha/beta domain maps to 3–132 (VNAVHWFRKG…EVIVRISHTL (130 aa)). Short sequence motifs (LIR) lie at residues 50–54 (NRWRF), 82–87 (DVFPRL), and 151–156 (KRFQTL). Ser252 contributes to the FAD binding site. Short sequence motifs (LIR) lie at residues 255-260 (LRFGCL), 271-276 (DLYKKV), 285-290 (SLYGQL), and 335-339 (TGFPW). Position 289 (Gln289) interacts with FAD. His355 is a binding site for FAD. An LIR 8 motif is present at residues 379–384 (KVFEEL). An FAD-binding site is contributed by 387-389 (DAD). 5 consecutive short sequence motifs (LIR) follow at residues 395 to 400 (GSWMWL), 411 to 416 (HCYCPV), 430 to 435 (RRYLPV), 486 to 491 (QIYQQL), and 492 to 497 (SRYRGL). The tract at residues 592-620 (GTGISAGKRPNPEEETQSVGPKVQRQSTN) is disordered.

It belongs to the DNA photolyase class-1 family. As to quaternary structure, component of the circadian core oscillator, which includes the CRY proteins, CLOCK or NPAS2, BMAL1 or BMAL2, CSNK1E, and the PER proteins. The cofactor is FAD. Requires (6R)-5,10-methylene-5,6,7,8-tetrahydrofolate as cofactor. In terms of tissue distribution, expressed in the retina. High levels found in ganglion cells of the retina.

It localises to the cytoplasm. It is found in the nucleus. Transcriptional repressor which forms a core component of the circadian clock. The circadian clock, an internal time-keeping system, regulates various physiological processes through the generation of approximately 24 hour circadian rhythms in gene expression, which are translated into rhythms in metabolism and behavior. It is derived from the Latin roots 'circa' (about) and 'diem' (day) and acts as an important regulator of a wide array of physiological functions including metabolism, sleep, body temperature, blood pressure, endocrine, immune, cardiovascular, and renal function. Consists of two major components: the central clock, residing in the suprachiasmatic nucleus (SCN) of the brain, and the peripheral clocks that are present in nearly every tissue and organ system. Both the central and peripheral clocks can be reset by environmental cues, also known as Zeitgebers (German for 'timegivers'). The predominant Zeitgeber for the central clock is light, which is sensed by retina and signals directly to the SCN. The central clock entrains the peripheral clocks through neuronal and hormonal signals, body temperature and feeding-related cues, aligning all clocks with the external light/dark cycle. Circadian rhythms allow an organism to achieve temporal homeostasis with its environment at the molecular level by regulating gene expression to create a peak of protein expression once every 24 hours to control when a particular physiological process is most active with respect to the solar day. Transcription and translation of core clock components (CLOCK, NPAS2, BMAL1, BMAL2, PER1, PER2, PER3, CRY1 and CRY2) plays a critical role in rhythm generation, whereas delays imposed by post-translational modifications (PTMs) are important for determining the period (tau) of the rhythms (tau refers to the period of a rhythm and is the length, in time, of one complete cycle). A diurnal rhythm is synchronized with the day/night cycle, while the ultradian and infradian rhythms have a period shorter and longer than 24 hours, respectively. Disruptions in the circadian rhythms contribute to the pathology of cardiovascular diseases, cancer, metabolic syndromes and aging. A transcription/translation feedback loop (TTFL) forms the core of the molecular circadian clock mechanism. Transcription factors, CLOCK or NPAS2 and BMAL1 or BMAL2, form the positive limb of the feedback loop, act in the form of a heterodimer and activate the transcription of core clock genes and clock-controlled genes (involved in key metabolic processes), harboring E-box elements (5'-CACGTG-3') within their promoters. The core clock genes: PER1/2/3 and CRY1/2 which are transcriptional repressors form the negative limb of the feedback loop and interact with the CLOCK|NPAS2-BMAL1|BMAL2 heterodimer inhibiting its activity and thereby negatively regulating their own expression. This heterodimer also activates nuclear receptors NR1D1, NR1D2, RORA, RORB and RORG, which form a second feedback loop and which activate and repress BMAL1 transcription, respectively. CRY1 and CRY2 have redundant functions but also differential and selective contributions at least in defining the pace of the SCN circadian clock and its circadian transcriptional outputs. More potent transcriptional repressor in cerebellum and liver than CRY2, though more effective in lengthening the period of the SCN oscillator. On its side, CRY2 seems to play a critical role in tuning SCN circadian period by opposing the action of CRY1. With CRY2, is dispensable for circadian rhythm generation but necessary for the development of intercellular networks for rhythm synchrony. Capable of translocating circadian clock core proteins such as PER proteins to the nucleus. Interacts with CLOCK:BMAL1 independently of PER proteins and is found at CLOCK:BMAL1-bound sites, suggesting that CRY may act as a molecular gatekeeper to maintain CLOCK:BMAL1 in a poised and repressed state until the proper time for transcriptional activation. This is Cryptochrome-1 (CRY1) from Sylvia borin (Garden warbler).